A 353-amino-acid polypeptide reads, in one-letter code: Ribosomal RNA small subunit methyltransferase (353 aa).

Basic residues predominate over residues 1–10 (MAGGKIRKEK). The segment at 1-23 (MAGGKIRKEKPKASNRAPSNHYQ) is disordered. S-adenosyl-L-methionine is bound by residues H35, L37, G62, E83, D111, and N126. Positions 270–313 (ALNTTSMDLGDQSMGMEDDDNEMDDDDMEMDEGEGDGGETSEFK) are disordered. Positions 285 to 308 (MEDDDNEMDDDDMEMDEGEGDGGE) are enriched in acidic residues.

It belongs to the class I-like SAM-binding methyltransferase superfamily. rRNA adenine N(6)-methyltransferase family. In terms of tissue distribution, expressed in rapidly dividing tissues, including root meristems and lateral root primordia, developing cotyledons and leaves, petals, anther, pollen grains and silique abscission zone.

The protein resides in the nucleus. The protein localises to the nucleolus. The enzyme catalyses adenosine(1785)/adenosine(1786) in 18S rRNA + 4 S-adenosyl-L-methionine = N(6)-dimethyladenosine(1785)/N(6)-dimethyladenosine(1786) in 18S rRNA + 4 S-adenosyl-L-homocysteine + 4 H(+). N6-adenine methyltransferase which modifies the AA dinucleotide at the plant nuclear 18S rRNA nucleotides A1785 and A1786. Required for generating appropriate patterns of gene expression during root development, including the cell-specific expression of transcriptional regulators involved in root hair and non-hair cells patterning. The chain is Ribosomal RNA small subunit methyltransferase from Arabidopsis thaliana (Mouse-ear cress).